Here is an 85-residue protein sequence, read N- to C-terminus: Small ribosomal subunit protein uS17 (85 aa).

The protein belongs to the universal ribosomal protein uS17 family. Part of the 30S ribosomal subunit.

Its function is as follows. One of the primary rRNA binding proteins, it binds specifically to the 5'-end of 16S ribosomal RNA. In Anaeromyxobacter sp. (strain Fw109-5), this protein is Small ribosomal subunit protein uS17.